A 262-amino-acid chain; its full sequence is tRNA 4-demethylwyosine(37)-methyltransferase Taw21 (262 aa).

Residues His108, Phe125, 148-149, and 175-176 contribute to the S-adenosyl-L-methionine site; these read DL and DA.

The protein belongs to the class I-like SAM-binding methyltransferase superfamily. TRM5/TYW2 family.

Its subcellular location is the cytoplasm. The enzyme catalyses 4-demethylwyosine(37) in tRNA(Phe) + S-adenosyl-L-methionine = isowyosine(37) in tRNA(Phe) + S-adenosyl-L-homocysteine + H(+). Its function is as follows. Catalyzes the C7-methylation of 4-demethylwyosine (imG-14) at position 37 in tRNA(Phe). In Saccharolobus solfataricus (strain ATCC 35092 / DSM 1617 / JCM 11322 / P2) (Sulfolobus solfataricus), this protein is tRNA 4-demethylwyosine(37)-methyltransferase Taw21.